Reading from the N-terminus, the 61-residue chain is Large ribosomal subunit protein uL30 (61 aa).

This sequence belongs to the universal ribosomal protein uL30 family. In terms of assembly, part of the 50S ribosomal subunit.

The polypeptide is Large ribosomal subunit protein uL30 (Legionella pneumophila (strain Paris)).